The sequence spans 302 residues: MKKDFLCLTDWSLEELENLFTLAADLKAKQKAGEQHHLLKGKTLGMLFEKSSTRTRVSFEVGMYQLGGHALFLSSGSTQMGRGEPIKDTGRVMSRYVDGIMIRTFSQEGVEELAQWSTIPIINGLTDMYHPCQVMADLLTVIEHKKNYRDLTYCWIGDGNNMANSWINAAAMFGFELRVATPKGYEPHALVVERAKKLGARVTYLNDPLEAARGAHVLNTDVWASMGQEEEQAKRAAAFAGFQINAETIAAADPACILLHCLPAHRDEEITDEAIESSHAVVFDEAENRLHIQKAIMATLMA.

Carbamoyl phosphate is bound by residues 52-55, Q79, R103, and 130-133; these read STRT and HPCQ. Residues N161, D221, and 225-226 each bind L-ornithine; that span reads SM. Carbamoyl phosphate-binding positions include 261 to 262 and R289; that span reads CL.

The protein belongs to the aspartate/ornithine carbamoyltransferase superfamily. OTCase family.

It localises to the cytoplasm. It catalyses the reaction carbamoyl phosphate + L-ornithine = L-citrulline + phosphate + H(+). It functions in the pathway amino-acid biosynthesis; L-arginine biosynthesis; L-arginine from L-ornithine and carbamoyl phosphate: step 1/3. Its function is as follows. Reversibly catalyzes the transfer of the carbamoyl group from carbamoyl phosphate (CP) to the N(epsilon) atom of ornithine (ORN) to produce L-citrulline. This is Ornithine carbamoyltransferase from Syntrophotalea carbinolica (strain DSM 2380 / NBRC 103641 / GraBd1) (Pelobacter carbinolicus).